A 233-amino-acid chain; its full sequence is Probable septum site-determining protein MinC (233 aa).

A disordered region spans residues 98–123; that stretch reads LTEGKEKAPRPAPSEPTPPPPPVANQ. The segment covering 107 to 120 has biased composition (pro residues); that stretch reads RPAPSEPTPPPPPV.

The protein belongs to the MinC family. In terms of assembly, interacts with MinD and FtsZ.

Cell division inhibitor that blocks the formation of polar Z ring septums. Rapidly oscillates between the poles of the cell to destabilize FtsZ filaments that have formed before they mature into polar Z rings. Prevents FtsZ polymerization. This is Probable septum site-determining protein MinC from Klebsiella pneumoniae (strain 342).